The sequence spans 501 residues: Glutamate--tRNA ligase (501 aa).

The 'HIGH' region signature appears at 11–21; it reads PSPTGPLHIGG. The 'KMSKS' region motif lies at 260 to 264; the sequence is KLSKR. K263 is a binding site for ATP.

The protein belongs to the class-I aminoacyl-tRNA synthetase family. Glutamate--tRNA ligase type 1 subfamily. Monomer.

It is found in the cytoplasm. The catalysed reaction is tRNA(Glu) + L-glutamate + ATP = L-glutamyl-tRNA(Glu) + AMP + diphosphate. Catalyzes the attachment of glutamate to tRNA(Glu) in a two-step reaction: glutamate is first activated by ATP to form Glu-AMP and then transferred to the acceptor end of tRNA(Glu). The protein is Glutamate--tRNA ligase of Flavobacterium johnsoniae (strain ATCC 17061 / DSM 2064 / JCM 8514 / BCRC 14874 / CCUG 350202 / NBRC 14942 / NCIMB 11054 / UW101) (Cytophaga johnsonae).